Here is a 187-residue protein sequence, read N- to C-terminus: Adenylate kinase (187 aa).

An ATP-binding site is contributed by 11-16; sequence GAGKGT. The tract at residues 31-60 is NMP; it reads STGDILREAVKNQTPMGIEAKRYMDAGDLV. Residues Thr32, Arg37, 58 to 60, 86 to 89, and Gln93 each bind AMP; these read DLV and GFPR. The segment at 127 to 137 is LID; that stretch reads GRAEIEGRADD. Arg128 is a binding site for ATP. AMP is bound by residues Arg134 and Arg145. Gly173 provides a ligand contact to ATP.

This sequence belongs to the adenylate kinase family. In terms of assembly, monomer.

The protein resides in the cytoplasm. The enzyme catalyses AMP + ATP = 2 ADP. Its pathway is purine metabolism; AMP biosynthesis via salvage pathway; AMP from ADP: step 1/1. Catalyzes the reversible transfer of the terminal phosphate group between ATP and AMP. Plays an important role in cellular energy homeostasis and in adenine nucleotide metabolism. This Leptospira borgpetersenii serovar Hardjo-bovis (strain JB197) protein is Adenylate kinase.